Consider the following 160-residue polypeptide: Cyclic pyranopterin monophosphate synthase (160 aa).

Residues 77–79 and 114–115 each bind substrate; these read MCH and ME. Residue Asp129 is part of the active site.

It belongs to the MoaC family. Homohexamer; trimer of dimers.

The catalysed reaction is (8S)-3',8-cyclo-7,8-dihydroguanosine 5'-triphosphate = cyclic pyranopterin phosphate + diphosphate. It functions in the pathway cofactor biosynthesis; molybdopterin biosynthesis. Its function is as follows. Catalyzes the conversion of (8S)-3',8-cyclo-7,8-dihydroguanosine 5'-triphosphate to cyclic pyranopterin monophosphate (cPMP). This is Cyclic pyranopterin monophosphate synthase from Listeria monocytogenes serotype 4a (strain HCC23).